Reading from the N-terminus, the 393-residue chain is Zinc-regulated GTPase metalloprotein activator 1 (393 aa).

A psi-PxLVp motif motif is present at residues 16–23 (EDCPELVP). GTP is bound at residue 47–54 (GYLGAGKT). The Zn(2+) site is built by Cys-105, Cys-107, and Cys-108. Residues 105–108 (CLCC) carry the CXCC motif motif. GTP-binding positions include 108–112 (CSVKD) and 201–204 (NKTD). The 104-residue stretch at 271-374 (IVTVTFEVPG…VLQQLFLTAV (104 aa)) folds into the CobW C-terminal domain.

Belongs to the SIMIBI class G3E GTPase family. ZNG1 subfamily. In terms of tissue distribution, present at high level in the nuclei of the ureteric bud cells in the developing kidneys.

The protein resides in the nucleus. The catalysed reaction is GTP + H2O = GDP + phosphate + H(+). Functionally, zinc chaperone that directly transfers zinc cofactor to target metalloproteins, thereby activating them. Catalyzes zinc insertion into the active site of methionine aminopeptidase METAP1, which function to cleave the initiator methionine from polypeptides during or after protein translation. Mechanistically, the N-terminal psi-PxLVp motif binds to the C6H2-type zinc finger of inactive form of METAP1. After formation of the docked complex, zinc is transferred from the CXCC motif in the GTPase domain of ZNG1 to the zinc binding site in the peptidase domain of METAP1 in a process requiring GTP hydrolysis. GTP/GDP exchange is required for release of active METAP1. The sequence is that of Zinc-regulated GTPase metalloprotein activator 1 (Zng1) from Mus musculus (Mouse).